The chain runs to 306 residues: Ribonuclease Z (306 aa).

Zn(2+) contacts are provided by His63, His65, Asp67, His68, His141, Asp211, and His269. The active-site Proton acceptor is the Asp67.

This sequence belongs to the RNase Z family. In terms of assembly, homodimer. It depends on Zn(2+) as a cofactor.

The enzyme catalyses Endonucleolytic cleavage of RNA, removing extra 3' nucleotides from tRNA precursor, generating 3' termini of tRNAs. A 3'-hydroxy group is left at the tRNA terminus and a 5'-phosphoryl group is left at the trailer molecule.. Its function is as follows. Zinc phosphodiesterase, which displays some tRNA 3'-processing endonuclease activity. Probably involved in tRNA maturation, by removing a 3'-trailer from precursor tRNA. The sequence is that of Ribonuclease Z from Macrococcus caseolyticus (strain JCSC5402) (Macrococcoides caseolyticum).